A 474-amino-acid chain; its full sequence is uncharacterized protein (474 aa).

The chain crosses the membrane as a helical span at residues 3-23 (LTLWLVLGAVGVGAVGTGVGF). Residues 171-296 (VSDGSSSKTR…KETKDRTKVD (126 aa)) are disordered. A compositionally biased stretch (basic residues) spans 180-210 (RTPKKTKTSKKKPIKKKSSKSKSSKGSKKQK). Positions 231–253 (TRSQSKQQKGQEQATDQTDSEGV) are enriched in polar residues. A compositionally biased stretch (acidic residues) spans 257–266 (EGADNTDTEL). Positions 267–281 (VETTAETTEQEATTK) are enriched in low complexity. Over residues 282–296 (STKDTKETKDRTKVD) the composition is skewed to basic and acidic residues.

It is found in the membrane. This is an uncharacterized protein from Mycoplasma pneumoniae (strain ATCC 29342 / M129 / Subtype 1) (Mycoplasmoides pneumoniae).